We begin with the raw amino-acid sequence, 156 residues long: Small ribosomal subunit protein uS7 (156 aa).

It belongs to the universal ribosomal protein uS7 family. In terms of assembly, part of the 30S ribosomal subunit. Contacts proteins S9 and S11.

In terms of biological role, one of the primary rRNA binding proteins, it binds directly to 16S rRNA where it nucleates assembly of the head domain of the 30S subunit. Is located at the subunit interface close to the decoding center, probably blocks exit of the E-site tRNA. The protein is Small ribosomal subunit protein uS7 of Streptococcus pyogenes serotype M12 (strain MGAS2096).